Reading from the N-terminus, the 292-residue chain is Expansin-B11 (292 aa).

The first 27 residues, 1–27 (MAKSCTLVLLLVALVGLSLLVSPIACS), serve as a signal peptide directing secretion. Asparagine 51 carries N-linked (GlcNAc...) asparagine glycosylation. The region spanning 82 to 192 (GGACGYQTAV…RRVPCKYSGV (111 aa)) is the Expansin-like EG45 domain. 3 disulfides stabilise this stretch: cysteine 85/cysteine 114, cysteine 117/cysteine 187, and cysteine 122/cysteine 128. An Expansin-like CBD domain is found at 205 to 287 (FYFEVLIEFE…SWKPGVTYRS (83 aa)).

The protein belongs to the expansin family. Expansin B subfamily. As to expression, expressed in internodes.

It localises to the secreted. It is found in the cell wall. The protein localises to the membrane. In terms of biological role, may cause loosening and extension of plant cell walls by disrupting non-covalent bonding between cellulose microfibrils and matrix glucans. No enzymatic activity has been found. May be required for rapid internodal elongation in deepwater rice during submergence. This is Expansin-B11 (EXPB11) from Oryza sativa subsp. japonica (Rice).